The primary structure comprises 297 residues: Universal stress protein MT2698 (297 aa).

ATP-binding positions include glycine 13, alanine 43, 117-123 (GCLGSGR), arginine 127, 131-132 (SV), glycine 165, aspartate 198, 262-268 (GSRGRGG), and 276-278 (SVG).

Belongs to the universal stress protein A family. In terms of assembly, homodimer.

May play a role in the establishment of a persistent infection (latency) in the host. The protein is Universal stress protein MT2698 of Mycobacterium tuberculosis (strain CDC 1551 / Oshkosh).